Reading from the N-terminus, the 396-residue chain is Flap endonuclease 1 (396 aa).

An N-domain region spans residues 1-104; sequence MGIKHLYQLI…GELAKRFQRK (104 aa). Asp34 is a binding site for Mg(2+). Positions 47 and 70 each coordinate DNA. Residues Asp86, Glu158, Glu160, Asp179, and Asp181 each coordinate Mg(2+). The I-domain stretch occupies residues 122–255; the sequence is DVEKFSRRTV…STALKLIRDH (134 aa). Glu158 provides a ligand contact to DNA. 2 residues coordinate DNA: Gly233 and Asp235. Residue Asp235 coordinates Mg(2+). Residues 338 to 396 are disordered; that stretch reads MKSAQQSRLEGFFKPVERTPEEKASLKRKADEKLSEKKKKQKEEAKAKKQAKSKPRTAG. The interval 342–350 is interaction with PCNA; the sequence is QQSRLEGFF. Positions 352–384 are enriched in basic and acidic residues; it reads PVERTPEEKASLKRKADEKLSEKKKKQKEEAKA. Residues 385 to 396 show a composition bias toward basic residues; sequence KKQAKSKPRTAG.

The protein belongs to the XPG/RAD2 endonuclease family. FEN1 subfamily. In terms of assembly, interacts with PCNA. Three molecules of FEN1 bind to one PCNA trimer with each molecule binding to one PCNA monomer. PCNA stimulates the nuclease activity without altering cleavage specificity. The cofactor is Mg(2+). In terms of processing, phosphorylated. Phosphorylation upon DNA damage induces relocalization to the nuclear plasma.

Its subcellular location is the nucleus. It localises to the nucleolus. It is found in the nucleoplasm. The protein localises to the mitochondrion. Structure-specific nuclease with 5'-flap endonuclease and 5'-3' exonuclease activities involved in DNA replication and repair. During DNA replication, cleaves the 5'-overhanging flap structure that is generated by displacement synthesis when DNA polymerase encounters the 5'-end of a downstream Okazaki fragment. It enters the flap from the 5'-end and then tracks to cleave the flap base, leaving a nick for ligation. Also involved in the long patch base excision repair (LP-BER) pathway, by cleaving within the apurinic/apyrimidinic (AP) site-terminated flap. Acts as a genome stabilization factor that prevents flaps from equilibrating into structures that lead to duplications and deletions. Also possesses 5'-3' exonuclease activity on nicked or gapped double-stranded DNA, and exhibits RNase H activity. Also involved in replication and repair of rDNA and in repairing mitochondrial DNA. The chain is Flap endonuclease 1 from Phaeosphaeria nodorum (strain SN15 / ATCC MYA-4574 / FGSC 10173) (Glume blotch fungus).